A 196-amino-acid chain; its full sequence is DnaA initiator-associating protein DiaA (196 aa).

Residues 34 to 196 enclose the SIS domain; it reads LVQSLLNGNK…DNTLFPHQDD (163 aa).

Belongs to the SIS family. DiaA subfamily. Homotetramer; dimer of dimers.

Functionally, required for the timely initiation of chromosomal replication via direct interactions with the DnaA initiator protein. The chain is DnaA initiator-associating protein DiaA from Shigella flexneri serotype 5b (strain 8401).